A 497-amino-acid chain; its full sequence is MSIITMVWLMKVFVFVTLLSLVFVITESAPESALITKLPGFEGTFPSKHYSGYVTIDKEHGKNLWYYFIESEKNPSKDPVVLWLNGGPGCSSMDGFVYEHGPFNFELPKKNNSLPLLHLNPYSWSKVSNIIYLDSPVGVGFSYSNNKSDYITGDIKTAVDSHAFLLKWFQMFPEFQSNPFFISGESYAGVYVPTLASEVVIGNKNGVKPALNFKGYLVGNGVADPKFDGNAFVPFAHGMGLISDELFENVTKACKGNFYEIEGLECEEQYTKVNDDTNQLNIYNILEPCYHGTSLSAFDIRSLPSSLLQLGKTEKRLPIRKRMFGRAWPVRAPVHPGIVPSWSQLLADVTVPCIDDRVATAWLNDPEIRKAIHTKEESEIGRWELCSGKLSFYHDAGSMIDFHRNLTLSGYRALIYSGDHDMCVPFTGSEAWTKSLGYKVIDEWRAWISNDQVAGYTQGYANNLTFLTIKGAGHTVPEYKPREALDFYSRFLEGSKI.

The N-terminal stretch at 1–29 (MSIITMVWLMKVFVFVTLLSLVFVITESA) is a signal peptide. 3 disulfide bridges follow: Cys90–Cys386, Cys254–Cys266, and Cys289–Cys353. N-linked (GlcNAc...) asparagine glycans are attached at residues Asn111 and Asn146. Residue Ser186 is part of the active site. N-linked (GlcNAc...) asparagine glycosylation is present at Asn249. The N-linked (GlcNAc...) asparagine glycan is linked to Asn405. The active site involves Asp421. Asn463 is a glycosylation site (N-linked (GlcNAc...) asparagine). His474 is an active-site residue. The short motif at 495–497 (SKI) is the Microbody targeting signal element.

The protein belongs to the peptidase S10 family. Ubiquitous.

It localises to the secreted. In terms of biological role, probable carboxypeptidase. In Arabidopsis thaliana (Mouse-ear cress), this protein is Serine carboxypeptidase-like 20 (SCPL20).